We begin with the raw amino-acid sequence, 178 residues long: Cytochrome b6-f complex iron-sulfur subunit (178 aa).

The helical transmembrane segment at 20–42 (LLTFGSVTGVALGSLYPVVKYFI) threads the bilayer. A Rieske domain is found at 68-161 (WLANHSDGDR…IAVENDNVFV (94 aa)). Cys-107, His-109, Cys-125, and His-128 together coordinate [2Fe-2S] cluster. Residues Cys-112 and Cys-127 are joined by a disulfide bond.

Belongs to the Rieske iron-sulfur protein family. The 4 large subunits of the cytochrome b6-f complex are cytochrome b6, subunit IV (17 kDa polypeptide, PetD), cytochrome f and the Rieske protein, while the 4 small subunits are PetG, PetL, PetM and PetN. The complex functions as a dimer. The cofactor is [2Fe-2S] cluster.

The protein resides in the cellular thylakoid membrane. It catalyses the reaction 2 oxidized [plastocyanin] + a plastoquinol + 2 H(+)(in) = 2 reduced [plastocyanin] + a plastoquinone + 4 H(+)(out). Component of the cytochrome b6-f complex, which mediates electron transfer between photosystem II (PSII) and photosystem I (PSI), cyclic electron flow around PSI, and state transitions. This is Cytochrome b6-f complex iron-sulfur subunit from Prochlorococcus marinus (strain MIT 9303).